The following is a 502-amino-acid chain: Inosine-5'-monophosphate dehydrogenase 2 (502 aa).

N-acetylserine is present on Ser2. One can recognise a CBS domain in the interval 166-225; it reads MKSCENKDYYVPWDIDLDKIEAVLEDKQKGFVVLEKEGETVNVVTKDDVERVKGYPKLGS. Residues 264–266 and 314–316 contribute to the NAD(+) site; these read DSS and GMG. Positions 316 and 318 each coordinate K(+). Ser319 contacts IMP. Position 321 (Cys321) interacts with K(+). The Thioimidate intermediate role is filled by Cys321. IMP-binding positions include 354-356, 377-378, and 401-405; these read DGG, GS, and YRGMG. The Proton acceptor role is filled by Arg417. Gln429 is a binding site for IMP. K(+)-binding residues include Glu488, Gly489, and Gly490.

This sequence belongs to the IMPDH/GMPR family. As to quaternary structure, homotetramer. It depends on K(+) as a cofactor.

It is found in the cytoplasm. The catalysed reaction is IMP + NAD(+) + H2O = XMP + NADH + H(+). It functions in the pathway purine metabolism; XMP biosynthesis via de novo pathway; XMP from IMP: step 1/1. With respect to regulation, mycophenolic acid (MPA) is a non-competitive inhibitor that prevents formation of the closed enzyme conformation by binding to the same site as the amobile flap. In contrast, mizoribine monophosphate (MZP) is a competitive inhibitor that induces the closed conformation. MPA is a potent inhibitor of mammalian IMPDHs but a poor inhibitor of the bacterial enzymes. MZP is a more potent inhibitor of bacterial IMPDH. Functionally, catalyzes the conversion of inosine 5'-phosphate (IMP) to xanthosine 5'-phosphate (XMP), the first committed and rate-limiting step in the de novo synthesis of guanine nucleotides, and therefore plays an important role in the regulation of cell growth. In Arabidopsis thaliana (Mouse-ear cress), this protein is Inosine-5'-monophosphate dehydrogenase 2.